The chain runs to 621 residues: Very-long-chain aldehyde decarbonylase GL1-5 (621 aa).

The next 5 membrane-spanning stretches (helical) occupy residues 99–119 (IILS…GQHL), 126–146 (GAGL…YWFH), 186–206 (LLFS…IIAF), 224–244 (FELV…LMYT), and 332–352 (MWPL…SFTV). Residues 138 to 272 (VEFLYYWFHR…MPFYDYIYNT (135 aa)) form the Fatty acid hydroxylase domain.

Belongs to the sterol desaturase family. In terms of assembly, homodimer. Expressed in panicles, developing spikelets, stamens and hulls and, at low levels, in roots, developing seeds, flag leaves and seedling shoots. Strongly expressed in the epidermal cells of anthers.

Its subcellular location is the endoplasmic reticulum membrane. The enzyme catalyses a long-chain fatty aldehyde + 2 NADPH + O2 + H(+) = a long-chain alkane + formate + 2 NADP(+) + H2O. Functionally, aldehyde decarbonylase involved in the conversion of aldehydes to alkanes. Core component of a very-long-chain alkane synthesis complex. Required for the biosynthesis of very-long-chain fatty acids (including polyesters) in cuticles, anther tapetum and pollen exine. The polypeptide is Very-long-chain aldehyde decarbonylase GL1-5 (Oryza sativa subsp. japonica (Rice)).